Consider the following 112-residue polypeptide: Frizzy aggregation protein FrzB (112 aa).

In terms of biological role, necessary for proper aggregation of cells to form fruiting bodies. FRZ genes define a system of signal transduction analogous to the enterobacterial chemotaxis systems. This is Frizzy aggregation protein FrzB (frzB) from Myxococcus xanthus.